We begin with the raw amino-acid sequence, 253 residues long: Triosephosphate isomerase (253 aa).

9–11 (NWK) contributes to the substrate binding site. The active-site Electrophile is the H95. Residue E167 is the Proton acceptor of the active site. Substrate is bound by residues G173, S213, and 234 to 235 (GG). S213 is modified (phosphoserine).

Belongs to the triosephosphate isomerase family. As to quaternary structure, homodimer.

The protein resides in the cytoplasm. It carries out the reaction D-glyceraldehyde 3-phosphate = dihydroxyacetone phosphate. It participates in carbohydrate biosynthesis; gluconeogenesis. It functions in the pathway carbohydrate degradation; glycolysis; D-glyceraldehyde 3-phosphate from glycerone phosphate: step 1/1. In terms of biological role, involved in the gluconeogenesis. Catalyzes stereospecifically the conversion of dihydroxyacetone phosphate (DHAP) to D-glyceraldehyde-3-phosphate (G3P). This Bacillus subtilis (strain 168) protein is Triosephosphate isomerase.